Reading from the N-terminus, the 165-residue chain is uncharacterized protein (165 aa).

A helical transmembrane segment spans residues 20–40; the sequence is INLIASIVLWLLFVITVIGTF. The N-linked (GlcNAc...) asparagine; by host glycan is linked to asparagine 51. The helical transmembrane segment at 97–117 threads the bilayer; that stretch reads VGIIVILIFMLMIIMNGFYQM.

The protein resides in the membrane. This is an uncharacterized protein from Acanthamoeba polyphaga (Amoeba).